The following is a 396-amino-acid chain: MSKLNAYFGEYGGQFVPQILVPALDQLEQEFIKAQADESFKQEFKELLQEYAGRPTALTKTRNIVKNTKTTLYLKREDLLHGGAHKTNQVLGQALLAKRMGKKEIIAETGAGQHGVATALACALLDLKCRVYMGAKDVERQSPNVFRMKLMGAEVIPVHSGSATLKDACNEALRDWSANYSKAHYLLGTAAGPHPFPTIVREFQRMIGEETKQQILAKEGRLPDAVIACVGGGSNAIGMFADFIDEKNVKLIGVEPAGKGIETGEHGAPLKHGKTGIFFGMKAPLMQNSDGQIEESYSISAGLDFPSVGPQHAHLLAIGRAEYASATDDEALDAFKLLCKKEGIIPALESSHALAHALKLAYEDPNKEQLLVVNLSGRGDKDIFTVHDILKEKGEI.

An N6-(pyridoxal phosphate)lysine modification is found at lysine 86.

Belongs to the TrpB family. As to quaternary structure, tetramer of two alpha and two beta chains. Pyridoxal 5'-phosphate serves as cofactor.

The catalysed reaction is (1S,2R)-1-C-(indol-3-yl)glycerol 3-phosphate + L-serine = D-glyceraldehyde 3-phosphate + L-tryptophan + H2O. It participates in amino-acid biosynthesis; L-tryptophan biosynthesis; L-tryptophan from chorismate: step 5/5. The beta subunit is responsible for the synthesis of L-tryptophan from indole and L-serine. The sequence is that of Tryptophan synthase beta chain from Francisella tularensis subsp. novicida (strain U112).